Reading from the N-terminus, the 206-residue chain is High frequency lysogenization protein HflD homolog (206 aa).

It belongs to the HflD family.

The protein resides in the cytoplasm. It is found in the cell inner membrane. In Pseudomonas savastanoi pv. phaseolicola (strain 1448A / Race 6) (Pseudomonas syringae pv. phaseolicola (strain 1448A / Race 6)), this protein is High frequency lysogenization protein HflD homolog.